Here is a 312-residue protein sequence, read N- to C-terminus: Olfactory receptor 6C74 (312 aa).

The Extracellular portion of the chain corresponds to 1–23 (MRNHTTVANFILLGLTDDPQLQV). The N-linked (GlcNAc...) asparagine glycan is linked to Asn-3. A helical transmembrane segment spans residues 24–44 (IIFLLLFFTYMLSITGNLTII). Residues 45 to 63 (TLTLLDLHLKTPMYFFLRN) lie on the Cytoplasmic side of the membrane. Residues 64-84 (FSFLEVSFTTVYIPKFLVSMA) traverse the membrane as a helical segment. Over 85–95 (TGDKTISYNDC) the chain is Extracellular. Residues Cys-95 and Cys-177 are joined by a disulfide bond. The chain crosses the membrane as a helical span at residues 96–116 (AAQLFFTILLGATEFFLLAAM). Over 117–140 (SYERYVAICKPLHYTTIMSSRVCS) the chain is Cytoplasmic. Residues 141-161 (LLVFASWMAGFLIIFPPLLMG) form a helical membrane-spanning segment. Residues 162 to 194 (LQLDFCAANTVDHFFCDVSPILQLSCTDTDIIE) are Extracellular-facing. A helical transmembrane segment spans residues 195–215 (LMMLLSAILTLLVTLVLVILS). At 216–237 (YTNIIRTILKIPSSQQRKKAFS) the chain is on the cytoplasmic side. A helical transmembrane segment spans residues 238–258 (TCSSHMVVVSISYGSCIFMYV). Residues 259–269 (KPSAKERVSLN) lie on the Extracellular side of the membrane. A helical transmembrane segment spans residues 270 to 290 (KGIALLSTSVAPMLNPFIYTL). Residues 291 to 312 (RNKQVKDVFKHTVKKIELFSMK) lie on the Cytoplasmic side of the membrane.

This sequence belongs to the G-protein coupled receptor 1 family.

It localises to the cell membrane. Functionally, odorant receptor. This Homo sapiens (Human) protein is Olfactory receptor 6C74 (OR6C74).